The following is a 145-amino-acid chain: MSDSSKTNQCCPTPCCPPKPCCPPKPCCLQKSPCCPKSPCCPPKSPCCTPKVCPCPTPCPCPATCPAACACPCPMKPCCPTKCTCCPKKCTCCPQPTCCVQPTCCSSENKTESDSDGSGQTQDRGAQTQQSPQGGQGNWNQKKTK.

Residues serine 38, serine 45, serine 113, and serine 131 each carry the phosphoserine modification. Positions 105 to 145 (CSSENKTESDSDGSGQTQDRGAQTQQSPQGGQGNWNQKKTK) are disordered. Residues 116–145 (DGSGQTQDRGAQTQQSPQGGQGNWNQKKTK) are compositionally biased toward polar residues.

Testis. Selectively expressed in the spermatids of seminiferous tubules and in flagella of epididymal sperm.

It is found in the cytoplasm. The protein localises to the mitochondrion membrane. In terms of biological role, involved in sperm motility. Its absence is associated with genetic background dependent male infertility. Infertility may be due to reduced sperm motility in the female reproductive tract and inability to penetrate the oocyte zona pellucida. This Rattus norvegicus (Rat) protein is Sperm mitochondrial-associated cysteine-rich protein (Smcp).